We begin with the raw amino-acid sequence, 555 residues long: Protein NRT1/ PTR FAMILY 2.1 (555 aa).

12 consecutive transmembrane segments (helical) span residues 32-52 (TLLG…VFLI), 68-88 (IVNG…DSFF), 91-111 (IPVI…LTLI), 127-147 (ILCQ…LALV), 175-195 (FFNW…TAIV), 205-225 (LGFG…ISGK), 324-344 (VLPL…QASM), 369-389 (VIVL…IYPI), 401-421 (LQQV…SAIV), 437-457 (VLWL…HYMA), 476-496 (SVTS…INLI), and 517-537 (WVLV…SWYF).

It belongs to the major facilitator superfamily. Proton-dependent oligopeptide transporter (POT/PTR) (TC 2.A.17) family. As to expression, expressed in roots.

The protein localises to the membrane. Transporter involved in a passive nitrate efflux. The polypeptide is Protein NRT1/ PTR FAMILY 2.1 (NPF2.1) (Arabidopsis thaliana (Mouse-ear cress)).